We begin with the raw amino-acid sequence, 452 residues long: Solute carrier family 52, riboflavin transporter, member 3-B (452 aa).

A run of 5 helical transmembrane segments spans residues leucine 11–valine 31, tryptophan 38–isoleucine 58, proline 73–tryptophan 93, leucine 111–methionine 131, and leucine 138–valine 158. N-linked (GlcNAc...) asparagine glycans are attached at residues asparagine 168, asparagine 174, asparagine 179, and asparagine 193. The next 6 membrane-spanning stretches (helical) occupy residues phenylalanine 199–leucine 219, valine 285–valine 305, alanine 321–isoleucine 341, leucine 344–methionine 364, alanine 381–isoleucine 401, and alanine 412–phenylalanine 432.

Belongs to the riboflavin transporter family.

The protein localises to the cell membrane. It carries out the reaction riboflavin(in) = riboflavin(out). Functionally, plasma membrane transporter mediating the uptake by cells of the water soluble vitamin B2/riboflavin that plays a key role in biochemical oxidation-reduction reactions of the carbohydrate, lipid, and amino acid metabolism. The protein is Solute carrier family 52, riboflavin transporter, member 3-B (slc52a3b) of Danio rerio (Zebrafish).